Consider the following 129-residue polypeptide: Cytochrome c3 (129 aa).

Positions 1 to 22 (MRKLFFCGVLALAVAFALPVVA) are cleaved as a signal peptide. Positions 44, 47, 52, 55, 56, 57, 68, 73, 74, 92, 101, 104, 105, 122, 127, and 128 each coordinate heme c.

In terms of processing, binds 4 heme c groups per subunit.

Its subcellular location is the periplasm. Functionally, participates in sulfate respiration coupled with phosphorylation by transferring electrons from the enzyme dehydrogenase to ferredoxin. The sequence is that of Cytochrome c3 from Nitratidesulfovibrio vulgaris (strain ATCC 29579 / DSM 644 / CCUG 34227 / NCIMB 8303 / VKM B-1760 / Hildenborough) (Desulfovibrio vulgaris).